The primary structure comprises 90 residues: Small ribosomal subunit protein uS19 (90 aa).

This sequence belongs to the universal ribosomal protein uS19 family.

Protein S19 forms a complex with S13 that binds strongly to the 16S ribosomal RNA. This is Small ribosomal subunit protein uS19 from Mesomycoplasma hyopneumoniae (strain 232) (Mycoplasma hyopneumoniae).